Here is a 761-residue protein sequence, read N- to C-terminus: Coenzyme PQQ synthesis protein F (761 aa).

His49 provides a ligand contact to Zn(2+). Catalysis depends on Glu52, which acts as the Proton acceptor. The Zn(2+) site is built by His53 and Glu130.

It belongs to the peptidase M16 family. Zn(2+) is required as a cofactor.

Its pathway is cofactor biosynthesis; pyrroloquinoline quinone biosynthesis. In terms of biological role, required for coenzyme pyrroloquinoline quinone (PQQ) biosynthesis. It is thought that this protein is a protease that cleaves peptides bond in a small peptide (gene pqqA), providing the glutamate and tyrosine residues which are necessary for the synthesis of PQQ. This chain is Coenzyme PQQ synthesis protein F (pqqF), found in Klebsiella pneumoniae.